A 375-amino-acid chain; its full sequence is Growth/differentiation factor 8 (375 aa).

Residues 1-23 form the signal peptide; it reads MQKIVVYVYIYLFVQISVDPVAL. The propeptide occupies 24-266; the sequence is DGSSQPTENT…VTDTPKRSRR (243 aa). An N-linked (GlcNAc...) asparagine glycan is attached at Asn71. Disulfide bonds link Cys272–Cys282, Cys281–Cys340, Cys309–Cys372, and Cys313–Cys374.

This sequence belongs to the TGF-beta family. As to quaternary structure, homodimer; disulfide-linked.

The protein localises to the secreted. Functionally, acts specifically as a negative regulator of skeletal muscle growth. The chain is Growth/differentiation factor 8 (MSTN) from Coturnix coturnix (Common quail).